We begin with the raw amino-acid sequence, 356 residues long: Alanine racemase (356 aa).

Residue lysine 35 is the Proton acceptor; specific for D-alanine of the active site. Position 35 is an N6-(pyridoxal phosphate)lysine (lysine 35). Arginine 130 is a binding site for substrate. Tyrosine 253 functions as the Proton acceptor; specific for L-alanine in the catalytic mechanism. Methionine 301 contributes to the substrate binding site.

Belongs to the alanine racemase family. Pyridoxal 5'-phosphate is required as a cofactor.

The enzyme catalyses L-alanine = D-alanine. It participates in amino-acid biosynthesis; D-alanine biosynthesis; D-alanine from L-alanine: step 1/1. Functionally, catalyzes the interconversion of L-alanine and D-alanine. May also act on other amino acids. The chain is Alanine racemase (alr) from Burkholderia mallei (strain NCTC 10229).